We begin with the raw amino-acid sequence, 557 residues long: Protein NRT1/ PTR FAMILY 5.14 (557 aa).

2 consecutive transmembrane segments (helical) span residues 35–55 (AALF…GIGS) and 78–98 (AWSG…DAFL). A Phosphothreonine modification is found at threonine 103. 10 helical membrane passes run 104–124 (IIIS…SAFL), 133–153 (SSTS…VAIG), 183–203 (FFNW…LVVV), 209–229 (FSWA…LVLF), 320–340 (IPVW…MTFF), 357–377 (IPPA…VPIY), 401–421 (IGTG…VEFK), 443–463 (IWWL…TLVG), 479–499 (IGLA…SLLI), and 526–546 (YFYW…LFIS).

Belongs to the major facilitator superfamily. Proton-dependent oligopeptide transporter (POT/PTR) (TC 2.A.17) family. Expressed in roots.

The protein localises to the membrane. The sequence is that of Protein NRT1/ PTR FAMILY 5.14 (NPF5.14) from Arabidopsis thaliana (Mouse-ear cress).